A 197-amino-acid polypeptide reads, in one-letter code: Prefoldin subunit 3 (197 aa).

The interval 1–26 (MASLALRGSSENPAPTKDTTTNPRGI) is disordered. Positions 9–23 (SSENPAPTKDTTTNP) are enriched in polar residues.

The protein belongs to the prefoldin subunit alpha family. Heterohexamer of two PFD-alpha type and four PFD-beta type subunits.

Prefoldin subunit; part of the gene cluster that mediates the biosynthesis of elsinochromes, pigments consisting of at least four interconvertible tautomers (A, B, C and D) that have a core phenolic quinone to which various side chains are attached and which play an important role in fungal pathogenesis. The non-reducing polyketide synthase PKS1 was proposed to iteratively catalyze decarboxylation between acetyl-CoA and malonyl-CoA subunits for polyketide chain elongation. The released polyketide undergoes cyclization to form an aromatic ring, and proceeds via serial modification steps to produce the heptaketide back- bone of elsinochrome. As elsinochrome has a symmetrical structure, two identical heptaketides are fused to form a core 1,2-dihydrobenzo-perylene ring structure, which can then be successively modified to produce the various derivatives of elsinochrome. Some of these reactions may be cooperatively carried out, at least in part, by the products of RDT1, OXR1 and PKS1. PRF1, embedded within the elsinochrome cluster possibly functions to stabilize some of the biosynthetic enzymes required for elsinochrome production. As prefoldin is a hexamer containing 2 a and 4 b subunits, additional prefoldin subunits, whose coding genes may not immediately link to the elsinochrome biosynthetic gene cluster, are required to fulfill the chaperone function. In addition, no methyltransferase-coding gene exists within the biosynthetic gene cluster, even though elsinochrome has four methyl groups at positions C3, C7, C8 and C12. Apparently, the identified gene cluster does not contain the entire entourage of genes responsible for elsinochrome biosynthesis. Once elsinochrome is synthesized, it must be exported outside the fungal cells, which is probably accomplished by the ECT1 transporter, to avoid toxicity. The polypeptide is Prefoldin subunit 3 (Elsinoe fawcettii (Citrus scab fungus)).